The chain runs to 132 residues: Outer membrane protein RomA (132 aa).

The protein to M.tuberculosis Rv0906.

Its subcellular location is the cell outer membrane. The sequence is that of Outer membrane protein RomA (romA) from Klebsiella pneumoniae.